The primary structure comprises 521 residues: Glycogen synthase (521 aa).

Lys18 contributes to the ADP-alpha-D-glucose binding site.

It belongs to the glycosyltransferase 1 family. Bacterial/plant glycogen synthase subfamily.

It catalyses the reaction [(1-&gt;4)-alpha-D-glucosyl](n) + ADP-alpha-D-glucose = [(1-&gt;4)-alpha-D-glucosyl](n+1) + ADP + H(+). It participates in glycan biosynthesis; glycogen biosynthesis. Its function is as follows. Synthesizes alpha-1,4-glucan chains using ADP-glucose. The polypeptide is Glycogen synthase (Bordetella petrii (strain ATCC BAA-461 / DSM 12804 / CCUG 43448)).